The following is a 322-amino-acid chain: Carnosine N-methyltransferase 2 (322 aa).

Glutamate 58 is a binding site for substrate. Residues glycine 90, glutamate 119, serine 150, and isoleucine 172 each contribute to the S-adenosyl-L-methionine site. Asparagine 313 lines the substrate pocket.

The protein belongs to the class I-like SAM-binding methyltransferase superfamily. HNMT family. Monomer.

The enzyme catalyses carnosine + S-adenosyl-L-methionine = anserine + S-adenosyl-L-homocysteine + H(+). Its function is as follows. N-methyltransferase that mediates the formation of anserine (beta-alanyl-N(Pi)-methyl-L-histidine) from carnosine. Anserine, a methylated derivative of carnosine (beta-alanyl-L-histidine), is an abundant constituent of vertebrate skeletal muscles. The polypeptide is Carnosine N-methyltransferase 2 (Gallus gallus (Chicken)).